The following is a 309-amino-acid chain: Interferon-inducible double-stranded RNA-dependent protein kinase activator A homolog A (309 aa).

The tract at residues 1 to 22 (MSQERFPAAPKMSSEKPTSLDA) is disordered. 3 DRBM domains span residues 31–98 (TPIQ…ILRG), 123–191 (NPVG…KFKT), and 236–304 (DYVK…YLKI).

The protein belongs to the PRKRA family. As to quaternary structure, homodimer. Interacts with dicer1 and eif2ak2/pkr. Also able to interact with dsRNA.

The protein resides in the cytoplasm. It localises to the perinuclear region. It is found in the nucleus. In terms of biological role, activates eif2ak2/pkr in the absence of double-stranded RNA (dsRNA), leading to phosphorylation of eif2s1/efi2-alpha and inhibition of translation and induction of apoptosis. Required for siRNA production by dicer1 and for subsequent siRNA-mediated post-transcriptional gene silencing. Does not seem to be required for processing of pre-miRNA to miRNA by dicer1. The chain is Interferon-inducible double-stranded RNA-dependent protein kinase activator A homolog A (prkra-a) from Xenopus laevis (African clawed frog).